A 261-amino-acid chain; its full sequence is CD40 ligand (261 aa).

The Cytoplasmic segment spans residues 1–22 (MIETYNQTSPRSAATGLPISMK). A helical; Signal-anchor for type II membrane protein membrane pass occupies residues 23–46 (IFMYLLTVFLITQMIGSALFAVYL). The Extracellular portion of the chain corresponds to 47-261 (HRRLDKIEDE…GFTSFGLLKL (215 aa)). In terms of domain architecture, THD spans 122–261 (IAAHVISEAS…GFTSFGLLKL (140 aa)). A disulfide bridge connects residues Cys178 and Cys218. Asn240 is a glycosylation site (N-linked (GlcNAc...) (complex) asparagine; alternate). An N-linked (GlcNAc...) (high mannose) asparagine; alternate glycan is attached at Asn240.

It belongs to the tumor necrosis factor family. In terms of assembly, homotrimer. Interacts with isoform 3 of CD28. CD40 ligand, soluble form: Exists as either a monomer or a homotrimer. Forms a ternary complex between CD40 and integrins for CD40-CD40LG signaling. In terms of processing, the soluble form derives from the membrane form by proteolytic processing. Post-translationally, N-linked glycan is a mixture of high mannose and complex type. Glycan structure does not influence binding affinity to CD40. Not O-glycosylated. As to expression, specifically expressed on activated CD4+ T-lymphocytes.

The protein resides in the cell membrane. It is found in the cell surface. The protein localises to the secreted. Its function is as follows. Cytokine that acts as a ligand to CD40/TNFRSF5. Costimulates T-cell proliferation and cytokine production. Its cross-linking on T-cells generates a costimulatory signal which enhances the production of IL4 and IL10 in conjunction with the TCR/CD3 ligation and CD28 costimulation. Induces the activation of NF-kappa-B. Induces the activation of kinases MAPK8 and PAK2 in T-cells. Induces tyrosine phosphorylation of isoform 3 of CD28. Mediates B-cell proliferation in the absence of co-stimulus as well as IgE production in the presence of IL4. Involved in immunoglobulin class switching. In terms of biological role, acts as a ligand for integrins, specifically ITGA5:ITGB1 and ITGAV:ITGB3; both integrins and the CD40 receptor are required for activation of CD40-CD40LG signaling, which have cell-type dependent effects, such as B-cell activation, NF-kappa-B signaling and anti-apoptotic signaling. In Homo sapiens (Human), this protein is CD40 ligand (CD40LG).